The primary structure comprises 275 residues: Bis(5'-nucleosyl)-tetraphosphatase, symmetrical (275 aa).

Belongs to the Ap4A hydrolase family.

The catalysed reaction is P(1),P(4)-bis(5'-adenosyl) tetraphosphate + H2O = 2 ADP + 2 H(+). Its function is as follows. Hydrolyzes diadenosine 5',5'''-P1,P4-tetraphosphate to yield ADP. In Stutzerimonas stutzeri (strain A1501) (Pseudomonas stutzeri), this protein is Bis(5'-nucleosyl)-tetraphosphatase, symmetrical.